The primary structure comprises 311 residues: GTP cyclohydrolase FolE2 (311 aa).

This sequence belongs to the GTP cyclohydrolase IV family.

It catalyses the reaction GTP + H2O = 7,8-dihydroneopterin 3'-triphosphate + formate + H(+). It participates in cofactor biosynthesis; 7,8-dihydroneopterin triphosphate biosynthesis; 7,8-dihydroneopterin triphosphate from GTP: step 1/1. Functionally, converts GTP to 7,8-dihydroneopterin triphosphate. The protein is GTP cyclohydrolase FolE2 of Xanthomonas campestris pv. campestris (strain 8004).